The primary structure comprises 352 residues: Small ribosomal subunit biogenesis GTPase RsgA (352 aa).

The segment covering 1–15 (MTKRKLTQNQKRRIH) has biased composition (basic residues). Positions 1–26 (MTKRKLTQNQKRRIHSNNVKALDRHH) are disordered. The CP-type G domain maps to 106-274 (ENEIARPDYY…LIDSPGIREF (169 aa)). Residues 162–165 (NKVD) and 216–224 (GQSGVGKSS) contribute to the GTP site. Residues C298, C303, H305, and C311 each coordinate Zn(2+).

The protein belongs to the TRAFAC class YlqF/YawG GTPase family. RsgA subfamily. As to quaternary structure, monomer. Associates with 30S ribosomal subunit, binds 16S rRNA. Requires Zn(2+) as cofactor.

Its subcellular location is the cytoplasm. In terms of biological role, one of several proteins that assist in the late maturation steps of the functional core of the 30S ribosomal subunit. Helps release RbfA from mature subunits. May play a role in the assembly of ribosomal proteins into the subunit. Circularly permuted GTPase that catalyzes slow GTP hydrolysis, GTPase activity is stimulated by the 30S ribosomal subunit. In Mannheimia succiniciproducens (strain KCTC 0769BP / MBEL55E), this protein is Small ribosomal subunit biogenesis GTPase RsgA.